Consider the following 334-residue polypeptide: Protein-methionine-sulfoxide reductase catalytic subunit MsrP (334 aa).

Positions 1 to 44 form a signal peptide, tat-type signal; the sequence is MKKNQFLKESDVTAESVFFMKRRQVLKALGISAAALSLPHAAHA. Residues Asn-88, 91-92, Cys-146, Thr-181, Asn-233, Arg-238, and 249-251 each bind Mo-molybdopterin; these read YE and GIK.

This sequence belongs to the MsrP family. Heterodimer of a catalytic subunit (MsrP) and a heme-binding subunit (MsrQ). Requires Mo-molybdopterin as cofactor. In terms of processing, predicted to be exported by the Tat system. The position of the signal peptide cleavage has not been experimentally proven.

Its subcellular location is the periplasm. The enzyme catalyses L-methionyl-[protein] + a quinone + H2O = L-methionyl-(S)-S-oxide-[protein] + a quinol. It carries out the reaction L-methionyl-[protein] + a quinone + H2O = L-methionyl-(R)-S-oxide-[protein] + a quinol. In terms of biological role, part of the MsrPQ system that repairs oxidized periplasmic proteins containing methionine sulfoxide residues (Met-O), using respiratory chain electrons. Thus protects these proteins from oxidative-stress damage caused by reactive species of oxygen and chlorine generated by the host defense mechanisms. MsrPQ is essential for the maintenance of envelope integrity under bleach stress, rescuing a wide series of structurally unrelated periplasmic proteins from methionine oxidation, including the primary periplasmic chaperone SurA and the lipoprotein Pal. The catalytic subunit MsrP is non-stereospecific, being able to reduce both (R-) and (S-) diastereoisomers of methionine sulfoxide. The polypeptide is Protein-methionine-sulfoxide reductase catalytic subunit MsrP (Escherichia coli O9:H4 (strain HS)).